The chain runs to 238 residues: NADH-quinone oxidoreductase subunit C (238 aa).

Residues 1-20 (MSSPDQNPSDAAGQTGSSNE) are disordered.

The protein belongs to the complex I 30 kDa subunit family. In terms of assembly, NDH-1 is composed of 14 different subunits. Subunits NuoB, C, D, E, F, and G constitute the peripheral sector of the complex.

It localises to the cell membrane. The catalysed reaction is a quinone + NADH + 5 H(+)(in) = a quinol + NAD(+) + 4 H(+)(out). In terms of biological role, NDH-1 shuttles electrons from NADH, via FMN and iron-sulfur (Fe-S) centers, to quinones in the respiratory chain. The immediate electron acceptor for the enzyme in this species is believed to be a menaquinone. Couples the redox reaction to proton translocation (for every two electrons transferred, four hydrogen ions are translocated across the cytoplasmic membrane), and thus conserves the redox energy in a proton gradient. In Mycobacterium marinum (strain ATCC BAA-535 / M), this protein is NADH-quinone oxidoreductase subunit C.